A 247-amino-acid polypeptide reads, in one-letter code: UDP-2,3-diacylglucosamine hydrolase (247 aa).

Positions 8, 10, 41, 79, and 114 each coordinate Mn(2+). Position 79-80 (79-80 (NR)) interacts with substrate. Residues D122, S160, D171, N174, and H202 each coordinate substrate. The Mn(2+) site is built by H202 and H204.

The protein belongs to the LpxH family. Requires Mn(2+) as cofactor.

The protein localises to the cell inner membrane. The catalysed reaction is UDP-2-N,3-O-bis[(3R)-3-hydroxytetradecanoyl]-alpha-D-glucosamine + H2O = 2-N,3-O-bis[(3R)-3-hydroxytetradecanoyl]-alpha-D-glucosaminyl 1-phosphate + UMP + 2 H(+). It participates in glycolipid biosynthesis; lipid IV(A) biosynthesis; lipid IV(A) from (3R)-3-hydroxytetradecanoyl-[acyl-carrier-protein] and UDP-N-acetyl-alpha-D-glucosamine: step 4/6. Hydrolyzes the pyrophosphate bond of UDP-2,3-diacylglucosamine to yield 2,3-diacylglucosamine 1-phosphate (lipid X) and UMP by catalyzing the attack of water at the alpha-P atom. Involved in the biosynthesis of lipid A, a phosphorylated glycolipid that anchors the lipopolysaccharide to the outer membrane of the cell. The chain is UDP-2,3-diacylglucosamine hydrolase from Xanthomonas oryzae pv. oryzae (strain MAFF 311018).